The following is a 602-amino-acid chain: DNA mismatch repair protein MutL (602 aa).

Belongs to the DNA mismatch repair MutL/HexB family.

Its function is as follows. This protein is involved in the repair of mismatches in DNA. It is required for dam-dependent methyl-directed DNA mismatch repair. May act as a 'molecular matchmaker', a protein that promotes the formation of a stable complex between two or more DNA-binding proteins in an ATP-dependent manner without itself being part of a final effector complex. The sequence is that of DNA mismatch repair protein MutL from Baumannia cicadellinicola subsp. Homalodisca coagulata.